Reading from the N-terminus, the 204-residue chain is Colicin-A (204 aa).

2 helical membrane passes run 139–161 (SWVL…LGAY) and 165–187 (LGVP…GALI).

The protein belongs to the channel forming colicin family.

It is found in the cell membrane. In terms of biological role, this colicin is a channel-forming colicin. This class of transmembrane toxins depolarize the cytoplasmic membrane, leading to dissipation of cellular energy. Functionally, colicins are polypeptide toxins produced by and active against E.coli and closely related bacteria. This chain is Colicin-A (caa), found in Escherichia coli.